Here is a 1283-residue protein sequence, read N- to C-terminus: Oxysterol-binding protein homolog 2 (1283 aa).

Ser2 is subject to N-acetylserine. The residue at position 7 (Ser7) is a Phosphoserine. ANK repeat units follow at residues 106–134 (NGNT…SIND) and 206–235 (TGTT…EATV). Residues 289–386 (PPTYKGFLKK…WVNAIQSAIR (98 aa)) form the PH domain. 7 positions are modified to phosphoserine: Ser422, Ser445, Ser451, Ser455, Ser458, Ser459, and Ser486. The residue at position 488 (Thr488) is a Phosphothreonine. Polar residues-rich tracts occupy residues 504-518 (SNTL…SGSG) and 530-551 (ANLS…NNYI). Disordered regions lie at residues 504–571 (SNTL…LGIN) and 702–721 (TAGN…DTTA). 2 positions are modified to phosphoserine: Ser512 and Ser515. The span at 554–568 (FEGDEANSDDEEEDL) shows a compositional bias: acidic residues. Over residues 707-716 (ESLENDKEQE) the composition is skewed to basic and acidic residues. Ser717 is subject to Phosphoserine. Positions 745-751 (EFYDAAE) match the FFAT motif. The segment at 767–834 (STAAAPKHAP…SLKNFKAEDK (68 aa)) is disordered. Position 783 is a phosphothreonine (Thr783). Ser787 is subject to Phosphoserine. 2 stretches are compositionally biased toward basic and acidic residues: residues 791–810 (QDEK…KFEK) and 818–834 (DEPK…AEDK). Phosphoserine occurs at positions 825 and 1151. The tract at residues 897–1268 (SLWAVLKSMV…KYWRYTGKYW (372 aa)) is OSBP-related domain (ORD).

Belongs to the OSBP family. As to quaternary structure, interacts with SCS2.

The protein localises to the cell membrane. The protein resides in the endoplasmic reticulum membrane. Lipid transport protein (LTP) involved in non-vesicular transfer of lipids between membranes. Functions in phosphoinositide-coupled directional transport of various lipids by carrying the lipid molecule in a hydrophobic pocket and transferring it between membranes through the cytosol. Involved in maintenance of intracellular sterol distribution and homeostasis. Binds and transports sterol. Plays a role in the positive regulation of vesicular transport of ceramide from the ER to the Golgi, negatively regulating COPII-mediated ER export of cargos. This is Oxysterol-binding protein homolog 2 from Saccharomyces cerevisiae (strain ATCC 204508 / S288c) (Baker's yeast).